The following is a 345-amino-acid chain: S-adenosylmethionine:tRNA ribosyltransferase-isomerase (345 aa).

The protein belongs to the QueA family. As to quaternary structure, monomer.

The protein localises to the cytoplasm. The enzyme catalyses 7-aminomethyl-7-carbaguanosine(34) in tRNA + S-adenosyl-L-methionine = epoxyqueuosine(34) in tRNA + adenine + L-methionine + 2 H(+). Its pathway is tRNA modification; tRNA-queuosine biosynthesis. Its function is as follows. Transfers and isomerizes the ribose moiety from AdoMet to the 7-aminomethyl group of 7-deazaguanine (preQ1-tRNA) to give epoxyqueuosine (oQ-tRNA). The polypeptide is S-adenosylmethionine:tRNA ribosyltransferase-isomerase (Rhodospirillum rubrum (strain ATCC 11170 / ATH 1.1.1 / DSM 467 / LMG 4362 / NCIMB 8255 / S1)).